The primary structure comprises 53 residues: Ribulose bisphosphate carboxylase large chain (53 aa).

Positions 1 to 2 (MS) are excised as a propeptide. Residue Pro3 is modified to N-acetylproline. Lys14 carries the N6,N6,N6-trimethyllysine modification.

Belongs to the RuBisCO large chain family. Type I subfamily. As to quaternary structure, heterohexadecamer of 8 large chains and 8 small chains.

The protein resides in the plastid. It localises to the chloroplast. The catalysed reaction is 2 (2R)-3-phosphoglycerate + 2 H(+) = D-ribulose 1,5-bisphosphate + CO2 + H2O. The enzyme catalyses D-ribulose 1,5-bisphosphate + O2 = 2-phosphoglycolate + (2R)-3-phosphoglycerate + 2 H(+). RuBisCO catalyzes two reactions: the carboxylation of D-ribulose 1,5-bisphosphate, the primary event in carbon dioxide fixation, as well as the oxidative fragmentation of the pentose substrate in the photorespiration process. Both reactions occur simultaneously and in competition at the same active site. The chain is Ribulose bisphosphate carboxylase large chain (rbcL) from Malus domestica (Apple).